Consider the following 537-residue polypeptide: Membrane protein insertase YidC (537 aa).

The next 4 helical transmembrane spans lie at 5-25 (LIIA…IFPT), 353-373 (GNYG…FFPL), 418-438 (VNPL…FGLY), and 495-515 (MLML…GLVI).

It belongs to the OXA1/ALB3/YidC family. Type 1 subfamily. Interacts with the Sec translocase complex via SecD. Specifically interacts with transmembrane segments of nascent integral membrane proteins during membrane integration.

Its subcellular location is the cell inner membrane. Its function is as follows. Required for the insertion and/or proper folding and/or complex formation of integral membrane proteins into the membrane. Involved in integration of membrane proteins that insert both dependently and independently of the Sec translocase complex, as well as at least some lipoproteins. Aids folding of multispanning membrane proteins. The polypeptide is Membrane protein insertase YidC (Citrifermentans bemidjiense (strain ATCC BAA-1014 / DSM 16622 / JCM 12645 / Bem) (Geobacter bemidjiensis)).